The following is a 195-amino-acid chain: Protein GrpE (195 aa).

Belongs to the GrpE family. Homodimer.

Its subcellular location is the cytoplasm. Its function is as follows. Participates actively in the response to hyperosmotic and heat shock by preventing the aggregation of stress-denatured proteins, in association with DnaK and GrpE. It is the nucleotide exchange factor for DnaK and may function as a thermosensor. Unfolded proteins bind initially to DnaJ; upon interaction with the DnaJ-bound protein, DnaK hydrolyzes its bound ATP, resulting in the formation of a stable complex. GrpE releases ADP from DnaK; ATP binding to DnaK triggers the release of the substrate protein, thus completing the reaction cycle. Several rounds of ATP-dependent interactions between DnaJ, DnaK and GrpE are required for fully efficient folding. The polypeptide is Protein GrpE (Francisella tularensis subsp. holarctica (strain OSU18)).